A 475-amino-acid polypeptide reads, in one-letter code: Aspartyl/glutamyl-tRNA(Asn/Gln) amidotransferase subunit B (475 aa).

It belongs to the GatB/GatE family. GatB subfamily. In terms of assembly, heterotrimer of A, B and C subunits.

The catalysed reaction is L-glutamyl-tRNA(Gln) + L-glutamine + ATP + H2O = L-glutaminyl-tRNA(Gln) + L-glutamate + ADP + phosphate + H(+). It carries out the reaction L-aspartyl-tRNA(Asn) + L-glutamine + ATP + H2O = L-asparaginyl-tRNA(Asn) + L-glutamate + ADP + phosphate + 2 H(+). Its function is as follows. Allows the formation of correctly charged Asn-tRNA(Asn) or Gln-tRNA(Gln) through the transamidation of misacylated Asp-tRNA(Asn) or Glu-tRNA(Gln) in organisms which lack either or both of asparaginyl-tRNA or glutaminyl-tRNA synthetases. The reaction takes place in the presence of glutamine and ATP through an activated phospho-Asp-tRNA(Asn) or phospho-Glu-tRNA(Gln). This is Aspartyl/glutamyl-tRNA(Asn/Gln) amidotransferase subunit B from Macrococcus caseolyticus (strain JCSC5402) (Macrococcoides caseolyticum).